The sequence spans 336 residues: Glyceraldehyde-3-phosphate dehydrogenase (336 aa).

NAD(+)-binding positions include 12 to 13 (RI), aspartate 34, and arginine 79. D-glyceraldehyde 3-phosphate-binding positions include 150-152 (SCT), threonine 181, 210-211 (TG), and arginine 233. The active-site Nucleophile is the cysteine 151. Position 315 (asparagine 315) interacts with NAD(+).

This sequence belongs to the glyceraldehyde-3-phosphate dehydrogenase family. Homotetramer.

The protein resides in the cytoplasm. It catalyses the reaction D-glyceraldehyde 3-phosphate + phosphate + NAD(+) = (2R)-3-phospho-glyceroyl phosphate + NADH + H(+). It participates in carbohydrate degradation; glycolysis; pyruvate from D-glyceraldehyde 3-phosphate: step 1/5. Functionally, involved in osmoadaptation. The chain is Glyceraldehyde-3-phosphate dehydrogenase (gpdA) from Emericella nidulans (strain FGSC A4 / ATCC 38163 / CBS 112.46 / NRRL 194 / M139) (Aspergillus nidulans).